We begin with the raw amino-acid sequence, 269 residues long: Imidazole glycerol phosphate synthase subunit HisF (269 aa).

Catalysis depends on residues D23 and D142.

This sequence belongs to the HisA/HisF family. In terms of assembly, heterodimer of HisH and HisF.

The protein localises to the cytoplasm. It carries out the reaction 5-[(5-phospho-1-deoxy-D-ribulos-1-ylimino)methylamino]-1-(5-phospho-beta-D-ribosyl)imidazole-4-carboxamide + L-glutamine = D-erythro-1-(imidazol-4-yl)glycerol 3-phosphate + 5-amino-1-(5-phospho-beta-D-ribosyl)imidazole-4-carboxamide + L-glutamate + H(+). It functions in the pathway amino-acid biosynthesis; L-histidine biosynthesis; L-histidine from 5-phospho-alpha-D-ribose 1-diphosphate: step 5/9. In terms of biological role, IGPS catalyzes the conversion of PRFAR and glutamine to IGP, AICAR and glutamate. The HisF subunit catalyzes the cyclization activity that produces IGP and AICAR from PRFAR using the ammonia provided by the HisH subunit. The chain is Imidazole glycerol phosphate synthase subunit HisF from Bordetella parapertussis (strain 12822 / ATCC BAA-587 / NCTC 13253).